A 573-amino-acid chain; its full sequence is DNA damage-binding protein CMR1 (573 aa).

The interval 27-94 (DSLNDSISRE…EMEKAEERKR (68 aa)) is disordered. Positions 72-152 (TMEDSEEDKQ…EEIKKEEDST (81 aa)) form a coiled coil. Positions 79–94 (DKQMREEMEKAEERKR) are enriched in basic and acidic residues. WD repeat units lie at residues 218 to 259 (ITQQ…DDET), 268 to 308 (PHGK…STEV), 319 to 357 (DYPL…KQGE), 361 to 401 (LHDK…QKNS), 418 to 456 (HSRL…KLPL), 495 to 538 (GRWV…LCHL), and 542 to 573 (DRMT…YLFE).

It belongs to the WD repeat DDB2/WDR76 family.

In terms of biological role, DNA-binding protein that binds to both single- and double-stranded DNA. Binds preferentially to UV-damaged DNA. May be involved in DNA-metabolic processes. The sequence is that of DNA damage-binding protein CMR1 from Meyerozyma guilliermondii (strain ATCC 6260 / CBS 566 / DSM 6381 / JCM 1539 / NBRC 10279 / NRRL Y-324) (Yeast).